Consider the following 204-residue polypeptide: Somatotropin (204 aa).

Positions 1–17 (MDRAILLLSVVCLVVSS) are cleaved as a signal peptide. Gln18 bears the Pyrrolidone carboxylic acid mark. His36 serves as a coordination point for Zn(2+). A disulfide bond links Cys69 and Cys177. Glu186 is a Zn(2+) binding site. A disulfide bridge connects residues Cys194 and Cys202.

The protein belongs to the somatotropin/prolactin family.

It is found in the secreted. Its function is as follows. Growth hormone plays an important role in growth control and is involved in the regulation of several anabolic processes. Implicated as an osmoregulatory substance important for seawater adaptation. This is Somatotropin (gh) from Odontesthes argentinensis (Marine silverside).